We begin with the raw amino-acid sequence, 915 residues long: Metabotropic glutamate receptor 7 (915 aa).

A signal peptide spans methionine 1–glycine 34. Residues glutamine 35–tryptophan 590 are Extracellular-facing. An intrachain disulfide couples cysteine 67 to cysteine 109. Asparagine 98 carries an N-linked (GlcNAc...) asparagine glycan. L-glutamate-binding positions include serine 159, alanine 180–threonine 182, tyrosine 230, and aspartate 314. Disulfide bonds link cysteine 249–cysteine 541, cysteine 374–cysteine 390, cysteine 430–cysteine 437, cysteine 523–cysteine 542, cysteine 527–cysteine 545, cysteine 548–cysteine 560, and cysteine 563–cysteine 576. Position 407 (lysine 407) interacts with L-glutamate. Asparagine 458 and asparagine 486 each carry an N-linked (GlcNAc...) asparagine glycan. Asparagine 572 carries N-linked (GlcNAc...) asparagine glycosylation. The helical transmembrane segment at alanine 591–tyrosine 615 threads the bilayer. The Cytoplasmic segment spans residues asparagine 616–glutamate 627. A helical transmembrane segment spans residues leucine 628 to alanine 648. Residues lysine 649–valine 654 are Extracellular-facing. The helical transmembrane segment at cysteine 655 to threonine 675 threads the bilayer. The Cytoplasmic portion of the chain corresponds to lysine 676–glutamine 702. The chain crosses the membrane as a helical span at residues leucine 703–valine 723. The Extracellular portion of the chain corresponds to aspartate 724 to aspartate 753. Residues leucine 754–isoleucine 775 traverse the membrane as a helical segment. Over lysine 776–lysine 788 the chain is Cytoplasmic. The helical transmembrane segment at proline 789–glycine 810 threads the bilayer. Topologically, residues threonine 811 to leucine 825 are extracellular. A helical membrane pass occupies residues threonine 826–phenylalanine 850. The Cytoplasmic segment spans residues histidine 851 to isoleucine 915. The segment at serine 874–asparagine 895 is disordered. The span at lysine 879–leucine 892 shows a compositional bias: basic and acidic residues. Serine 900 is subject to Phosphoserine.

The protein belongs to the G-protein coupled receptor 3 family. In terms of assembly, homodimer. Interacts with PICK1.

The protein resides in the cell membrane. Functionally, G-protein coupled receptor activated by glutamate that regulates axon outgrowth through the MAPK-cAMP-PKA signaling pathway during neuronal development. Ligand binding causes a conformation change that triggers signaling via guanine nucleotide-binding proteins (G proteins) and modulates the activity of downstream effectors, such as adenylate cyclase that it inhibits. In Mus musculus (Mouse), this protein is Metabotropic glutamate receptor 7 (Grm7).